Reading from the N-terminus, the 242-residue chain is Ribose-5-phosphate isomerase A (242 aa).

Substrate-binding positions include serine 39 to threonine 42, aspartate 95 to aspartate 98, and lysine 108 to glycine 111. Glutamate 117 serves as the catalytic Proton acceptor. A substrate-binding site is contributed by lysine 135.

Belongs to the ribose 5-phosphate isomerase family. As to quaternary structure, homodimer.

It carries out the reaction aldehydo-D-ribose 5-phosphate = D-ribulose 5-phosphate. Its pathway is carbohydrate degradation; pentose phosphate pathway; D-ribose 5-phosphate from D-ribulose 5-phosphate (non-oxidative stage): step 1/1. Functionally, catalyzes the reversible conversion of ribose-5-phosphate to ribulose 5-phosphate. In Chlamydia trachomatis serovar D (strain ATCC VR-885 / DSM 19411 / UW-3/Cx), this protein is Ribose-5-phosphate isomerase A.